The sequence spans 392 residues: Elongation factor Tu (392 aa).

Positions 10-202 (KVHVNVGTIG…VLDEYIEDPI (193 aa)) constitute a tr-type G domain. The G1 stretch occupies residues 19–26 (GHVDHGKT). A GTP-binding site is contributed by 19–26 (GHVDHGKT). Residue T26 participates in Mg(2+) binding. Residues 60 to 64 (GITIN) form a G2 region. The tract at residues 81 to 84 (DCPG) is G3. GTP is bound by residues 81–85 (DCPGH) and 136–139 (NKCD). The interval 136–139 (NKCD) is G4. The segment at 174–176 (SAL) is G5.

This sequence belongs to the TRAFAC class translation factor GTPase superfamily. Classic translation factor GTPase family. EF-Tu/EF-1A subfamily. As to quaternary structure, monomer.

It is found in the cytoplasm. It catalyses the reaction GTP + H2O = GDP + phosphate + H(+). In terms of biological role, GTP hydrolase that promotes the GTP-dependent binding of aminoacyl-tRNA to the A-site of ribosomes during protein biosynthesis. The polypeptide is Elongation factor Tu (Phytoplasma mali (strain AT)).